Here is a 382-residue protein sequence, read N- to C-terminus: Tuliposide A-converting enzyme 2, chloroplastic (382 aa).

The N-terminal 74 residues, 1 to 74 (MSVASFFSSL…PSPSLSPTPT (74 aa)), are a transit peptide targeting the chloroplast. The active-site Acyl-ester intermediate is the Ser232. Active-site charge relay system residues include Asp324 and His356.

The protein belongs to the AB hydrolase superfamily. In terms of assembly, homodimer. Expressed in roots, stems, leaves, petals, stamens and pistils, but not in bulb scales.

It is found in the plastid. It localises to the chloroplast. It carries out the reaction 6-tuliposide A = tulipalin A + D-glucose. Its activity is regulated as follows. Inhibited by NaF, AgNO(3), HgCl(2), CuSO(4) and phenylmethylsulfonyl fluoride (PMSF). Its function is as follows. Lactone-forming carboxylesterases, specifically catalyzing intramolecular transesterification, but not hydrolysis. Involved in the biosynthesis of tulipalins, defensive chemicals that show antimicrobial activities against a broad range of strains of bacteria and fungi. Substrates are 6-tuliposide A &gt; 6-tuliposide B. In Tulipa gesneriana (Garden tulip), this protein is Tuliposide A-converting enzyme 2, chloroplastic (TCEA2).